The following is a 362-amino-acid chain: Peptide chain release factor 1 (362 aa).

The residue at position 237 (glutamine 237) is an N5-methylglutamine.

It belongs to the prokaryotic/mitochondrial release factor family. Post-translationally, methylated by PrmC. Methylation increases the termination efficiency of RF1.

It is found in the cytoplasm. Peptide chain release factor 1 directs the termination of translation in response to the peptide chain termination codons UAG and UAA. In Aliivibrio fischeri (strain ATCC 700601 / ES114) (Vibrio fischeri), this protein is Peptide chain release factor 1.